A 347-amino-acid polypeptide reads, in one-letter code: Probable 3-hydroxyisobutyrate dehydrogenase, mitochondrial (347 aa).

The transit peptide at 1 to 34 directs the protein to the mitochondrion; it reads MAIRRAQTLLCLSKFKTNFVSGSLHRFSSSSQNS. Residues 38-67, 101-102, and T134 contribute to the NAD(+) site; these read QNVG…TVHD and LP. K219 is a catalytic residue. Position 294 (K294) interacts with NAD(+).

Belongs to the HIBADH-related family. 3-hydroxyisobutyrate dehydrogenase subfamily.

Its subcellular location is the mitochondrion. The catalysed reaction is 3-hydroxy-2-methylpropanoate + NAD(+) = 2-methyl-3-oxopropanoate + NADH + H(+). Its pathway is amino-acid degradation; L-valine degradation. This chain is Probable 3-hydroxyisobutyrate dehydrogenase, mitochondrial, found in Arabidopsis thaliana (Mouse-ear cress).